The sequence spans 95 residues: MLHILMRSPFETNMVLLMNMLESVDDILMLQNSVVLALKNNVFLNKILSYSVSMYALKQDLCARGILDNISPNVNVIGYNRFVDLTVKHKQQMSW.

This sequence belongs to the DsrH/TusB family. In terms of assembly, heterohexamer, formed by a dimer of trimers. The hexameric TusBCD complex contains 2 copies each of TusB, TusC and TusD. The TusBCD complex interacts with TusE.

The protein localises to the cytoplasm. Its function is as follows. Part of a sulfur-relay system required for 2-thiolation of 5-methylaminomethyl-2-thiouridine (mnm(5)s(2)U) at tRNA wobble positions. This Buchnera aphidicola subsp. Baizongia pistaciae (strain Bp) protein is Protein TusB.